The sequence spans 83 residues: Acyl carrier protein (83 aa).

The 76-residue stretch at 2 to 77 (STIEEKVKTI…AAIDFISNSH (76 aa)) folds into the Carrier domain. Position 37 is an O-(pantetheine 4'-phosphoryl)serine (Ser37).

It belongs to the acyl carrier protein (ACP) family. In terms of processing, 4'-phosphopantetheine is transferred from CoA to a specific serine of apo-ACP by AcpS. This modification is essential for activity because fatty acids are bound in thioester linkage to the sulfhydryl of the prosthetic group.

It localises to the cytoplasm. Its pathway is lipid metabolism; fatty acid biosynthesis. Carrier of the growing fatty acid chain in fatty acid biosynthesis. The sequence is that of Acyl carrier protein from Blochmanniella pennsylvanica (strain BPEN).